The primary structure comprises 422 residues: DNA (cytosine-5)-methyltransferase 3-like (422 aa).

Residues 1-11 are compositionally biased toward polar residues; it reads MGSRETPSSCS. Residues 1 to 50 are disordered; that stretch reads MGSRETPSSCSKTHETLNLETPESSSTDPDSPLEEQWPKSAPDLKEEDSM. The segment covering 20–30 has biased composition (low complexity); the sequence is ETPESSSTDPD. In terms of domain architecture, ADD spans 76–208; that stretch reads EVNVNQRNIE…LKAFHDREGA (133 aa). A GATA-type; atypical zinc finger spans residues 87–117; that stretch reads ICLCCGSLQVYAQHPLFEGGICAPCKDKFLE. The segment at 128 to 184 adopts a PHD-type; atypical zinc-finger fold; it reads QSYCTICCSGHTLFICESPDCTRCYCFECVDILVGPGTSERINAMACWVCFLCLPFS.

In terms of assembly, homodimer. Heterotetramer composed of 1 DNMT3A homodimer and 2 DNMT3L subunits (DNMT3L-DNMT3A-DNMT3A-DNMT3L). Interacts with histone H3 (via N-terminus); interaction is strongly inhibited by methylation at lysine 4 (H3K4me). Interacts with EZH2; the interaction is direct. Interacts with SPOCD1.

Its subcellular location is the nucleus. Catalytically inactive regulatory factor of DNA methyltransferases that can either promote or inhibit DNA methylation depending on the context. Essential for the function of DNMT3A and DNMT3B: activates DNMT3A and DNMT3B by binding to their catalytic domain. Acts by accelerating the binding of DNA and S-adenosyl-L-methionine (AdoMet) to the methyltransferases and dissociates from the complex after DNA binding to the methyltransferases. Recognizes unmethylated histone H3 lysine 4 (H3K4me0) and induces de novo DNA methylation by recruitment or activation of DNMT3. Plays a key role in embryonic stem cells and germ cells. In germ cells, required for the methylation of imprinted loci together with DNMT3A. In male germ cells, specifically required to methylate retrotransposons, preventing their mobilization. Plays a key role in embryonic stem cells (ESCs) by acting both as an positive and negative regulator of DNA methylation. While it promotes DNA methylation of housekeeping genes together with DNMT3A and DNMT3B, it also acts as an inhibitor of DNA methylation at the promoter of bivalent genes. Interacts with the EZH2 component of the PRC2/EED-EZH2 complex, preventing interaction of DNMT3A and DNMT3B with the PRC2/EED-EZH2 complex, leading to maintain low methylation levels at the promoters of bivalent genes. Promotes differentiation of ESCs into primordial germ cells by inhibiting DNA methylation at the promoter of RHOX5, thereby activating its expression. The chain is DNA (cytosine-5)-methyltransferase 3-like (Dnmt3l) from Rattus norvegicus (Rat).